A 500-amino-acid polypeptide reads, in one-letter code: Monocarboxylate transporter 1 (500 aa).

Over methionine 1–valine 22 the chain is Cytoplasmic. The chain crosses the membrane as a helical span at residues valine 23–phenylalanine 44. Position 38 (lysine 38) interacts with (S)-lactate. The Extracellular portion of the chain corresponds to lysine 45–threonine 55. The chain crosses the membrane as a helical span at residues serine 56–valine 80. Residues asparagine 81–glycine 84 are Cytoplasmic-facing. A helical membrane pass occupies residues serine 85–phenylalanine 105. Over cysteine 106 to valine 109 the chain is Extracellular. The helical transmembrane segment at glutamine 110–leucine 132 threads the bilayer. Residues threonine 133–alanine 146 are Cytoplasmic-facing. The helical transmembrane segment at asparagine 147–phenylalanine 169 threads the bilayer. Topologically, residues glycine 170 to tryptophan 174 are extracellular. Residues arginine 175–leucine 194 form a helical membrane-spanning segment. The Cytoplasmic portion of the chain corresponds to methionine 195–arginine 261. Phosphoserine is present on residues serine 210 and serine 213. Threonine 231 bears the Phosphothreonine mark. A helical transmembrane segment spans residues glycine 262–glycine 288. At lysine 289–serine 295 the chain is on the extracellular side. The chain crosses the membrane as a helical span at residues glutamate 296 to glycine 317. Aspartate 309 is a binding site for H(+). Residue arginine 313 participates in (S)-lactate binding. The Cytoplasmic segment spans residues leucine 318–arginine 328. Residues isoleucine 329–leucine 349 form a helical membrane-spanning segment. The Extracellular segment spans residues serine 350–tyrosine 353. The chain crosses the membrane as a helical span at residues valine 354–phenylalanine 375. Residues glutamate 376–serine 389 lie on the Cytoplasmic side of the membrane. Residues alanine 390 to glycine 410 traverse the membrane as a helical segment. Residues arginine 411–tyrosine 421 lie on the Extracellular side of the membrane. The chain crosses the membrane as a helical span at residues threonine 422–isoleucine 443. Residues asparagine 444–valine 500 lie on the Cytoplasmic side of the membrane. Over residues alanine 454 to glutamate 465 the composition is skewed to basic and acidic residues. The segment at alanine 454 to valine 500 is disordered. The residue at position 461 (serine 461) is a Phosphoserine. Threonine 466 carries the post-translational modification Phosphothreonine. Serine 467, serine 483, and serine 498 each carry phosphoserine. Over residues glutamate 482–valine 500 the composition is skewed to basic and acidic residues.

Belongs to the major facilitator superfamily. Monocarboxylate porter (TC 2.A.1.13) family. As to quaternary structure, interacts with EMB; interaction mediates SLC16A1 targeting to the plasma membrane. Interacts with isoform 2 of BSG; interaction mediates SLC16A1 targeting to the plasma membrane. As to expression, widely expressed. Detected in heart and in blood lymphocytes and monocytes (at protein level).

Its subcellular location is the cell membrane. It localises to the basolateral cell membrane. The protein resides in the apical cell membrane. It carries out the reaction (S)-lactate(in) + H(+)(in) = (S)-lactate(out) + H(+)(out). The enzyme catalyses acetate(out) + H(+)(out) = acetate(in) + H(+)(in). The catalysed reaction is acetoacetate(out) + H(+)(out) = acetoacetate(in) + H(+)(in). It catalyses the reaction pyruvate(out) + H(+)(out) = pyruvate(in) + H(+)(in). It carries out the reaction (R)-3-hydroxybutanoate(out) + H(+)(out) = (R)-3-hydroxybutanoate(in) + H(+)(in). The enzyme catalyses 3-methyl-2-oxobutanoate(out) + H(+)(out) = 3-methyl-2-oxobutanoate(in) + H(+)(in). The catalysed reaction is 4-methyl-2-oxopentanoate(out) + H(+)(out) = 4-methyl-2-oxopentanoate(in) + H(+)(in). It catalyses the reaction succinate(in) + 2 H(+)(in) = succinate(out) + 2 H(+)(out). Selectively inhibited by AZD3965, that acts as a competitive inhibitor binding to the central channel in the outward open conformation. Its function is as follows. Bidirectional proton-coupled monocarboxylate transporter. Catalyzes the rapid transport across the plasma membrane of many monocarboxylates such as lactate, pyruvate, acetate and the ketone bodies acetoacetate and beta-hydroxybutyrate, and thus contributes to the maintenance of intracellular pH. The transport direction is determined by the proton motive force and the concentration gradient of the substrate monocarboxylate. MCT1 is a major lactate exporter. Plays a role in cellular responses to a high-fat diet by modulating the cellular levels of lactate and pyruvate that contribute to the regulation of central metabolic pathways and insulin secretion, with concomitant effects on plasma insulin levels and blood glucose homeostasis. Facilitates the protonated monocarboxylate form of succinate export, that its transient protonation upon muscle cell acidification in exercising muscle and ischemic heart. Functions via alternate outward- and inward-open conformation states. Protonation and deprotonation of 309-Asp is essential for the conformational transition. In Homo sapiens (Human), this protein is Monocarboxylate transporter 1.